The following is a 148-amino-acid chain: UPF0260 protein PC1_1943 (148 aa).

Belongs to the UPF0260 family.

The chain is UPF0260 protein PC1_1943 from Pectobacterium carotovorum subsp. carotovorum (strain PC1).